The primary structure comprises 63 residues: Alpha-conotoxin-like PuSG1.2 (63 aa).

The N-terminal stretch at 1 to 21 (MRCLALLVVTLLLFTATATTG) is a signal peptide. Residues 22-43 (ASNGMNAAASGEAPDSISLAVR) constitute a propeptide that is removed on maturation. Cystine bridges form between C46–C52 and C47–C60. Residues 48 to 50 (PDP) form a lacks the Ser-Xaa-Pro motif that is crucial for potent interaction with nAChR region.

It belongs to the conotoxin A superfamily. As to expression, expressed by the salivary gland.

Its subcellular location is the secreted. Alpha-conopeptides-like may act on postsynaptic membranes, they bind to the nicotinic acetylcholine receptors (nAChR) and thus inhibit them. Has possibly a distinct nAChR binding mode from other alpha-conotoxins, due to a different three residue motif (lacks the Ser-Xaa-Pro motif). The polypeptide is Alpha-conotoxin-like PuSG1.2 (Conus pulicarius (Flea-bitten cone)).